A 148-amino-acid chain; its full sequence is Large ribosomal subunit protein bL9 (148 aa).

This sequence belongs to the bacterial ribosomal protein bL9 family.

Functionally, binds to the 23S rRNA. This chain is Large ribosomal subunit protein bL9, found in Bifidobacterium adolescentis (strain ATCC 15703 / DSM 20083 / NCTC 11814 / E194a).